A 114-amino-acid chain; its full sequence is Large ribosomal subunit protein bL20 (114 aa).

It belongs to the bacterial ribosomal protein bL20 family.

Functionally, binds directly to 23S ribosomal RNA and is necessary for the in vitro assembly process of the 50S ribosomal subunit. It is not involved in the protein synthesizing functions of that subunit. This Anaeromyxobacter dehalogenans (strain 2CP-1 / ATCC BAA-258) protein is Large ribosomal subunit protein bL20.